Here is a 511-residue protein sequence, read N- to C-terminus: ATP synthase subunit alpha (511 aa).

An ATP-binding site is contributed by 169–176 (GDRQTGKT).

Belongs to the ATPase alpha/beta chains family. F-type ATPases have 2 components, CF(1) - the catalytic core - and CF(0) - the membrane proton channel. CF(1) has five subunits: alpha(3), beta(3), gamma(1), delta(1), epsilon(1). CF(0) has three main subunits: a(1), b(2) and c(9-12). The alpha and beta chains form an alternating ring which encloses part of the gamma chain. CF(1) is attached to CF(0) by a central stalk formed by the gamma and epsilon chains, while a peripheral stalk is formed by the delta and b chains.

It is found in the cell inner membrane. It carries out the reaction ATP + H2O + 4 H(+)(in) = ADP + phosphate + 5 H(+)(out). Produces ATP from ADP in the presence of a proton gradient across the membrane. The alpha chain is a regulatory subunit. The polypeptide is ATP synthase subunit alpha (Bartonella tribocorum (strain CIP 105476 / IBS 506)).